Here is an 85-residue protein sequence, read N- to C-terminus: U4-theraphotoxin-Hhn1d (85 aa).

Positions 1 to 22 are cleaved as a signal peptide; the sequence is MKVTLIAILTCAAVLVLHTTAA. Residues 23 to 48 constitute a propeptide that is removed on maturation; it reads EELEAESQLMEVGMPDTELAAVDEER. 3 disulfide bridges follow: Cys-52–Cys-66, Cys-56–Cys-77, and Cys-71–Cys-82.

This sequence belongs to the neurotoxin 12 (Hwtx-2) family. 02 (Hwtx-2) subfamily. As to expression, expressed by the venom gland.

Its subcellular location is the secreted. Its function is as follows. Postsynaptic neurotoxin. In Cyriopagopus hainanus (Chinese bird spider), this protein is U4-theraphotoxin-Hhn1d.